Here is a 156-residue protein sequence, read N- to C-terminus: MPRKGPVAKRDVLPDPMYNSKLVTRLINKMMVDGKKGKSQTILYNAFDIVRERTGKEPMEVFEQALKNIMPVLEVRARRVGGANYQVPVEVRPERRTTLGLRWLVNYARLRGEKTMEERLANEILDAANNTGASVKKREDTHKMAEANKAFAHYRW.

It belongs to the universal ribosomal protein uS7 family. Part of the 30S ribosomal subunit. Contacts proteins S9 and S11.

Its function is as follows. One of the primary rRNA binding proteins, it binds directly to 16S rRNA where it nucleates assembly of the head domain of the 30S subunit. Is located at the subunit interface close to the decoding center, probably blocks exit of the E-site tRNA. The chain is Small ribosomal subunit protein uS7 from Bacillus cytotoxicus (strain DSM 22905 / CIP 110041 / 391-98 / NVH 391-98).